Consider the following 199-residue polypeptide: MRAAGLGLGIGLLLLAALAGPGGSAEQGGVPAKKLRMAYATGPLLKFQICVSUGYRRVFEEYMRVISQRYPDIRIEGENYLPQPIYRHIASFLSVFKLVLIGLIIVGKDPFAFFGMQAPSIWQWGQENKVYACMMVFFLSNMIENQCMSTGAFEITLNDVPVWSKLESGHLPSMQQLVQILDNEMKLNVHMESMPHHRS.

The signal sequence occupies residues 1–24 (MRAAGLGLGIGLLLLAALAGPGGS). A cross-link (cysteinyl-selenocysteine (Cys-Sec)) is located at residues 50–53 (CVSU). Position 53 (Sec53) is a non-standard amino acid, selenocysteine. The helical transmembrane segment at 95 to 115 (VFKLVLIGLIIVGKDPFAFFG) threads the bilayer.

Belongs to the SelWTH family. Selenoprotein T subfamily. Post-translationally, may contain a selenide-sulfide bond between Cys-50 and Sec-53. This bond is speculated to serve as redox-active pair.

Its subcellular location is the endoplasmic reticulum membrane. The catalysed reaction is [thioredoxin]-dithiol + NADP(+) = [thioredoxin]-disulfide + NADPH + H(+). Functionally, selenoprotein with thioredoxin reductase-like oxidoreductase activity. The polypeptide is Thioredoxin reductase-like selenoprotein T (Gallus gallus (Chicken)).